We begin with the raw amino-acid sequence, 393 residues long: Formate-dependent phosphoribosylglycinamide formyltransferase (393 aa).

N(1)-(5-phospho-beta-D-ribosyl)glycinamide-binding positions include Glu-22 to Leu-23 and Glu-82. Residues Arg-114, Lys-155, Ser-160–Gln-165, Glu-195–Val-198, and Glu-203 contribute to the ATP site. Residues Arg-119 to Leu-308 enclose the ATP-grasp domain. 2 residues coordinate Mg(2+): Glu-267 and Glu-279. N(1)-(5-phospho-beta-D-ribosyl)glycinamide is bound by residues Asp-286, Lys-356, and Arg-363–Arg-364.

The protein belongs to the PurK/PurT family. Homodimer.

It catalyses the reaction N(1)-(5-phospho-beta-D-ribosyl)glycinamide + formate + ATP = N(2)-formyl-N(1)-(5-phospho-beta-D-ribosyl)glycinamide + ADP + phosphate + H(+). Its pathway is purine metabolism; IMP biosynthesis via de novo pathway; N(2)-formyl-N(1)-(5-phospho-D-ribosyl)glycinamide from N(1)-(5-phospho-D-ribosyl)glycinamide (formate route): step 1/1. Functionally, involved in the de novo purine biosynthesis. Catalyzes the transfer of formate to 5-phospho-ribosyl-glycinamide (GAR), producing 5-phospho-ribosyl-N-formylglycinamide (FGAR). Formate is provided by PurU via hydrolysis of 10-formyl-tetrahydrofolate. This Oleidesulfovibrio alaskensis (strain ATCC BAA-1058 / DSM 17464 / G20) (Desulfovibrio alaskensis) protein is Formate-dependent phosphoribosylglycinamide formyltransferase.